Here is a 696-residue protein sequence, read N- to C-terminus: Transcriptional activator of proteases prtT (696 aa).

The interval 106 to 126 (DVADGSGRPESSTSGDTIRPK) is disordered. Residues 136–165 (CNTCRKLKTRCDLDPRGHACRRCLSLRIEC) constitute a DNA-binding region (zn(2)-C6 fungal-type).

It belongs to the prtT family.

Its subcellular location is the nucleus. Transcription factor required for protein utilization and degradation. Regulates transcription of major secreted proteases including a serine alkaline protease (alk1), a metalloprotease (mep), an aspergillopepsin (pep1), a sedolisin (sed2) and two dipeptidyl-peptidases (dppIV and dppV). However, it is not a virulence determinant in leukopenic mice. In Aspergillus fumigatus (strain ATCC MYA-4609 / CBS 101355 / FGSC A1100 / Af293) (Neosartorya fumigata), this protein is Transcriptional activator of proteases prtT (prtT).